Reading from the N-terminus, the 440-residue chain is MNNNELYVSLDIGTSNTKVIVGEMTDDSLNIIGVGNVPSEGLKKGSIVDIDETVHSIRKAFDQAERMVGFPLRKAIVGVNGNYINIQDTNGVVAVSSENKEIQVEDVRRVMEAAQVVSVPHEQLIVDVIPKQFIVDGRDEITDPKKMLGVRLEVEGTLITGSKTILHNLLRCVERAGIEITDICLQPLAAGSAALSKDEKNLGVALIDIGGGSTTIAVFQNGHLTSTRVIPLGGENITKDISIGLRTSTEEAERVKKQLGHAYYDEASEDEIFEVTVIGTNQKQTFTQQEAANIIEARVEEILEIVSEELRSMGITDLPGGFVLTGGQAAMPGVMSLAQDVLQNNVRVASPNYIGVRDPQYMTGVGLIQFACRNARIQGRKIGFKMPEEAIQEIAVSSSEEQEQHHHQNEVQQRPKGKQKTQAEHNKQSKMKKLLSMFWE.

The segment at 396 to 440 (VSSSEEQEQHHHQNEVQQRPKGKQKTQAEHNKQSKMKKLLSMFWE) is disordered.

Belongs to the FtsA/MreB family. Homodimer. Interacts with FtsZ.

It is found in the cell membrane. Its function is as follows. Cell division protein that is required for the assembly of the Z ring. May serve as a membrane anchor for the Z ring. Binds and hydrolyzes ATP. Also involved in sporulation. The protein is Cell division protein FtsA of Bacillus subtilis (strain 168).